The sequence spans 476 residues: Protein transport protein Sec61 subunit alpha-like 1 (476 aa).

Residues Ala-2–Leu-33 lie on the Cytoplasmic side of the membrane. Residues Trp-34–Ile-53 form a helical membrane-spanning segment. At Met-54 to Leu-76 the chain is on the lumenal side. The helical transmembrane segment at Met-77–Gly-96 threads the bilayer. The Cytoplasmic portion of the chain corresponds to Ala-97–Lys-117. Residues Leu-118–Gly-138 form a helical membrane-spanning segment. At Asp-139 to Gly-144 the chain is on the lumenal side. Residues Ala-145–Leu-165 traverse the membrane as a helical segment. At Asp-166–Gly-172 the chain is on the cytoplasmic side. A helical membrane pass occupies residues Tyr-173–Trp-193. The Lumenal portion of the chain corresponds to Lys-194–Pro-240. The chain crosses the membrane as a helical span at residues Asn-241 to Phe-261. The Cytoplasmic portion of the chain corresponds to Arg-262–Asn-288. Residues Ile-289–Ser-309 traverse the membrane as a helical segment. Over Thr-310–Val-354 the chain is Lumenal. Residues Leu-355–Phe-375 traverse the membrane as a helical segment. Residues Ser-376–Ala-420 are Cytoplasmic-facing. A helical transmembrane segment spans residues Ala-421–Ile-441. Residues Gly-442–Thr-445 lie on the Lumenal side of the membrane. A helical membrane pass occupies residues Gly-446–Val-462. Residues Lys-463 to Phe-476 lie on the Cytoplasmic side of the membrane.

The protein belongs to the SecY/SEC61-alpha family. As to quaternary structure, the SEC61 channel-forming translocon complex consists of channel-forming core components SEC61A1, SEC61B and SEC61G and different auxiliary components such as SEC62 and SEC63. The SEC61 channel associates with the multi-pass translocon (MPT) complex.

It is found in the endoplasmic reticulum membrane. Component of SEC61 channel-forming translocon complex that mediates transport of signal peptide-containing precursor polypeptides across the endoplasmic reticulum (ER). Forms a ribosome receptor and a gated pore in the ER membrane, both functions required for cotranslational translocation of nascent polypeptides. May cooperate with auxiliary protein SEC62, SEC63 and HSPA5/BiP to enable post-translational transport of small presecretory proteins. The SEC61 channel is also involved in ER membrane insertion of transmembrane proteins: it mediates membrane insertion of the first few transmembrane segments of proteins, while insertion of subsequent transmembrane regions of multi-pass membrane proteins is mediated by the multi-pass translocon (MPT) complex. Plays a role in the pronephric kidney tubule development. This is Protein transport protein Sec61 subunit alpha-like 1 (sec61al1) from Danio rerio (Zebrafish).